The sequence spans 42 residues: MTENIISWNVANWVTVILMALAGYAVLALAAKVINNRAQEPA.

The chain crosses the membrane as a helical span at residues 10–30 (VANWVTVILMALAGYAVLALA).

It is found in the host membrane. This is an uncharacterized protein from Acinetobacter calcoaceticus (Arthrobacter siderocapsulatus).